A 126-amino-acid polypeptide reads, in one-letter code: Protein MGF 100-1R (126 aa).

This sequence belongs to the asfivirus MGF 100 family.

Functionally, plays a role in virus cell tropism, and may be required for efficient virus replication in macrophages. The chain is Protein MGF 100-1R from Ornithodoros (relapsing fever ticks).